The sequence spans 171 residues: Small ribosomal subunit protein uS4 (171 aa).

The 65-residue stretch at 104-168 (RRLQTIVYKK…SPFKERAEEA (65 aa)) folds into the S4 RNA-binding domain.

Belongs to the universal ribosomal protein uS4 family. Part of the 30S ribosomal subunit. Contacts protein S5. The interaction surface between S4 and S5 is involved in control of translational fidelity.

Its function is as follows. One of the primary rRNA binding proteins, it binds directly to 16S rRNA where it nucleates assembly of the body of the 30S subunit. In terms of biological role, with S5 and S12 plays an important role in translational accuracy. In Aeropyrum pernix (strain ATCC 700893 / DSM 11879 / JCM 9820 / NBRC 100138 / K1), this protein is Small ribosomal subunit protein uS4.